A 112-amino-acid chain; its full sequence is MGLKEYLFGFKGENMAAKYLVSQGFEILEKNFHSKFGEIDIIAKKDDVLHFVEVKSTSKDYETIYRVTQNKIYKIIKTINFYMLKYDFDLNYQIDIICIEQNKVKFIQNVSF.

Belongs to the UPF0102 family.

The sequence is that of UPF0102 protein CFF8240_0294 from Campylobacter fetus subsp. fetus (strain 82-40).